A 477-amino-acid chain; its full sequence is Trigger factor (477 aa).

The 86-residue stretch at Glu169–Leu254 folds into the PPIase FKBP-type domain. Positions Val435–Ala477 are disordered. Over residues Ala454–Lys466 the composition is skewed to basic residues. The segment covering Lys467–Ala477 has biased composition (basic and acidic residues).

Belongs to the FKBP-type PPIase family. Tig subfamily.

It localises to the cytoplasm. It carries out the reaction [protein]-peptidylproline (omega=180) = [protein]-peptidylproline (omega=0). Involved in protein export. Acts as a chaperone by maintaining the newly synthesized protein in an open conformation. Functions as a peptidyl-prolyl cis-trans isomerase. This Brucella anthropi (strain ATCC 49188 / DSM 6882 / CCUG 24695 / JCM 21032 / LMG 3331 / NBRC 15819 / NCTC 12168 / Alc 37) (Ochrobactrum anthropi) protein is Trigger factor.